A 304-amino-acid polypeptide reads, in one-letter code: Fluoroacetate dehalogenase (304 aa).

The AB hydrolase-1 domain occupies 26–151 (PALLLLHGFP…FVARAYWHWY (126 aa)). Asp104 acts as the Nucleophile in catalysis. Residues Arg105, Arg108, His149, Trp150, and Tyr212 each contribute to the fluoroacetate site. Residue His271 is the Proton acceptor of the active site.

Belongs to the AB hydrolase superfamily. Epoxide hydrolase family. As to quaternary structure, homodimer.

The enzyme catalyses a haloacetate + H2O = a halide anion + glycolate + H(+). It carries out the reaction fluoroacetate + H2O = fluoride + glycolate + H(+). Its function is as follows. Catalyzes the hydrolytic defluorination of fluoroacetate to produce glycolate. Has only very low activity towards chloroacetate and bromoacetate. The sequence is that of Fluoroacetate dehalogenase (fac-dex) from Burkholderia sp.